The chain runs to 371 residues: Putative glutamate--cysteine ligase 2 (371 aa).

Belongs to the glutamate--cysteine ligase type 2 family. YbdK subfamily.

The enzyme catalyses L-cysteine + L-glutamate + ATP = gamma-L-glutamyl-L-cysteine + ADP + phosphate + H(+). Functionally, ATP-dependent carboxylate-amine ligase which exhibits weak glutamate--cysteine ligase activity. This is Putative glutamate--cysteine ligase 2 from Burkholderia mallei (strain NCTC 10247).